Here is a 427-residue protein sequence, read N- to C-terminus: Enolase (427 aa).

A (2R)-2-phosphoglycerate-binding site is contributed by Gln-162. Glu-204 serves as the catalytic Proton donor. Residues Asp-241, Glu-282, and Asp-309 each coordinate Mg(2+). Positions 334, 363, 364, and 385 each coordinate (2R)-2-phosphoglycerate. Catalysis depends on Lys-334, which acts as the Proton acceptor.

Belongs to the enolase family. Mg(2+) is required as a cofactor.

The protein resides in the cytoplasm. It localises to the secreted. It is found in the cell surface. It catalyses the reaction (2R)-2-phosphoglycerate = phosphoenolpyruvate + H2O. It functions in the pathway carbohydrate degradation; glycolysis; pyruvate from D-glyceraldehyde 3-phosphate: step 4/5. Functionally, catalyzes the reversible conversion of 2-phosphoglycerate (2-PG) into phosphoenolpyruvate (PEP). It is essential for the degradation of carbohydrates via glycolysis. This is Enolase from Parafrankia sp. (strain EAN1pec).